Here is a 113-residue protein sequence, read N- to C-terminus: Large ribosomal subunit protein P2B (113 aa).

Positions 66 to 113 (PSGGGAIDMGAPAAVAGGGAAPAEEAKKEEKVEEKEESDEDMGFSLFD) are disordered. Residues 89 to 99 (EEAKKEEKVEE) are compositionally biased toward basic and acidic residues.

Belongs to the eukaryotic ribosomal protein P1/P2 family. In terms of assembly, P1 and P2 exist as dimers at the large ribosomal subunit. In terms of processing, phosphorylated.

Functionally, plays an important role in the elongation step of protein synthesis. The chain is Large ribosomal subunit protein P2B (RPP2B) from Zea mays (Maize).